Reading from the N-terminus, the 298-residue chain is MSRPEQQLKKMLKTPQAQYAFYPTAKVERISTTQHMYFIATRPMFEGGRNNVFLGHQVGQPIIFKYVSKKEIPGNEVIVLKALQDTPGVIKLIEYTENAMYHILIIEYIPNSVDLLHYHYFKKLEETEAKKIIFQLILIIQNIYEKGFIHGDIKDENLIIDINQKIIKVIDFGSAVRLDETRPQYNMFGTWEYVCPEFYYYGYYYQLPLTVWTIGMVAVNLFRFRAENFYLNDILKRENYIPENISETGKQFITECLTINENKRLSFKSLVSHPWFKGLKKEIQPISELGVDYKNVIT.

The 239-residue stretch at 38-276 folds into the Protein kinase domain; sequence FIATRPMFEG…FKSLVSHPWF (239 aa). Residues 45–53 and Lys-65 contribute to the ATP site; that span reads FEGGRNNVF. Catalysis depends on Asp-152, which acts as the Proton acceptor.

This sequence belongs to the protein kinase superfamily. Ser/Thr protein kinase family.

Its subcellular location is the virion. The protein resides in the host cytoplasm. The catalysed reaction is L-seryl-[protein] + ATP = O-phospho-L-seryl-[protein] + ADP + H(+). It carries out the reaction L-threonyl-[protein] + ATP = O-phospho-L-threonyl-[protein] + ADP + H(+). Functionally, essential for viral replication. It may mediate the virus progression through DNA replication. This African swine fever virus (strain Badajoz 1971 Vero-adapted) (Ba71V) protein is Serine/threonine-protein kinase 1.